The primary structure comprises 1133 residues: Roquin-1 (1133 aa).

7 residues coordinate Zn(2+): C14, C17, C33, H35, C38, C50, and D53. Residues 14 to 54 form an RING-type; degenerate zinc finger; it reads CPICTQTFDETIRKPISLGCGHTVCKMCLNKLHRKACPFDQ. An HEPN-N region spans residues 89 to 173; sequence GVEDTKHYEE…RTVTELILQH (85 aa). Residues 174 to 326 form an ROQ region; that stretch reads QNPQQLSSNL…MQSIIDKLQT (153 aa). Residues 327 to 396 are HEPN-C; sequence PASFAQSVQE…VVHGLVDYIQ (70 aa). Residues 413–441 form a C3H1-type zinc finger; sequence KYKTYMCRDMKQRGGCPRGASCTFAHSQE. Residues S462, S531, S535, and S863 each carry the phosphoserine modification. Positions 505–542 are disordered; that stretch reads TQLIPRGTDPSYDSSLKPGKIDHLSSSAPGSPPDLLES. Disordered regions lie at residues 1000–1019, 1058–1078, and 1094–1133; these read NTLAGQSQPPPPPPPKWPGM, NTSKQAENGQPEPQNKVPAED, and QENISLLSNKTSSLNLSEDPEGGGDNNDSQRSGVTPSSAP. Residues 1007 to 1016 show a composition bias toward pro residues; it reads QPPPPPPPKW. The segment covering 1058-1070 has biased composition (polar residues); that stretch reads NTSKQAENGQPEP. Low complexity predominate over residues 1096–1110; the sequence is NISLLSNKTSSLNLS. Residue S1110 is modified to Phosphoserine. Over residues 1119–1133 the composition is skewed to polar residues; it reads NNDSQRSGVTPSSAP.

Able to homodimerize. Interacts with DDX6 and EDC4. Interacts with CCR4-NOT deadenylase complex. Interacts with RC3H1; the interaction is RNA independent. Post-translationally, proteolytically cleaved after Arg-510 and Arg-579 by MALT1 in activated CD4(+) T cells; cleavage at Arg-510 and Arg-579 is critical for promoting RC3H1 degradation in response to T-cell receptor (TCR) stimulation, and hence is necessary for prolonging the stability of a set of mRNAs controlling Th17 cell differentiation. In terms of tissue distribution, widely expressed. Expressed at higher level in cerebellum, spleen, ovary and liver.

The protein resides in the cytoplasm. It localises to the P-body. The protein localises to the cytoplasmic granule. It carries out the reaction S-ubiquitinyl-[E2 ubiquitin-conjugating enzyme]-L-cysteine + [acceptor protein]-L-lysine = [E2 ubiquitin-conjugating enzyme]-L-cysteine + N(6)-ubiquitinyl-[acceptor protein]-L-lysine.. It participates in protein modification; protein ubiquitination. Functionally, post-transcriptional repressor of mRNAs containing a conserved stem loop motif, called constitutive decay element (CDE), which is often located in the 3'-UTR, as in HMGXB3, ICOS, IER3, NFKBID, NFKBIZ, PPP1R10, TNF, TNFRSF4 and in many more mRNAs. Cleaves translationally inactive mRNAs harboring a stem-loop (SL), often located in their 3'-UTRs, during the early phase of inflammation in a helicase UPF1-independent manner. Binds to CDE and promotes mRNA deadenylation and degradation. This process does not involve miRNAs. In follicular helper T (Tfh) cells, represses of ICOS and TNFRSF4 expression, thus preventing spontaneous Tfh cell differentiation, germinal center B-cell differentiation in the absence of immunization and autoimmunity. In resting or LPS-stimulated macrophages, controls inflammation by suppressing TNF expression. Also recognizes CDE in its own mRNA and in that of paralogous RC3H2, possibly leading to feedback loop regulation. Recognizes and binds mRNAs containing a hexaloop stem-loop motif, called alternative decay element (ADE). Together with ZC3H12A, destabilizes TNFRSF4/OX40 mRNA by binding to the conserved stem loop structure in its 3'UTR. Able to interact with double-stranded RNA (dsRNA). miRNA-binding protein that regulates microRNA homeostasis. Enhances DICER-mediated processing of pre-MIR146a but reduces mature MIR146a levels through an increase of 3' end uridylation. Both inhibits ICOS mRNA expression and they may act together to exert the suppression. Acts as a ubiquitin E3 ligase. Pairs with E2 enzymes UBE2A, UBE2B, UBE2D2, UBE2F, UBE2G1, UBE2G2 and UBE2L3 and produces polyubiquitin chains. Shows the strongest activity when paired with UBE2N:UBE2V1 or UBE2N:UBE2V2 E2 complexes and generate both short and long polyubiquitin chains. The sequence is that of Roquin-1 from Homo sapiens (Human).